Reading from the N-terminus, the 766-residue chain is ATP-dependent RNA helicase mak5 (766 aa).

Disordered stretches follow at residues 1 to 28 and 75 to 173; these read MGQK…AVED and LRFK…SIKP. The span at 78–91 shows a compositional bias: basic residues; sequence KAAHGKPKKSILKK. Acidic residues predominate over residues 95-106; that stretch reads EEEEPKFDDDEW. 2 stretches are compositionally biased toward basic and acidic residues: residues 114 to 126 and 132 to 171; these read VTEK…KEDQ and ADKP…DKSI. The short motif at 192–220 is the Q motif element; the sequence is SAWESLGLSPEILTSLSKMKFTTPTLVQK. Residues 223 to 433 form the Helicase ATP-binding domain; it reads IPQILDGHDV…AGKARWTGGD (211 aa). 236–243 contacts ATP; it reads ASTGSGKT. Residues 360–363 carry the DEAD box motif; the sequence is DEAD. The region spanning 485 to 635 is the Helicase C-terminal domain; it reads YLYTLLLYNP…KLPLESLELD (151 aa). The segment at 683-711 is disordered; it reads EEFESAQGRGRGRGRGRQERQRKAGEVTK. A compositionally biased stretch (basic and acidic residues) spans 698–711; the sequence is GRQERQRKAGEVTK.

The protein belongs to the DEAD box helicase family. DDX24/MAK5 subfamily.

The protein resides in the nucleus. It is found in the nucleolus. The enzyme catalyses ATP + H2O = ADP + phosphate + H(+). Its function is as follows. ATP-binding RNA helicase involved in the biogenesis of 60S ribosomal subunits and is required for the normal formation of 25S and 5.8S rRNAs. The sequence is that of ATP-dependent RNA helicase mak5 (mak5) from Aspergillus niger (strain ATCC MYA-4892 / CBS 513.88 / FGSC A1513).